Here is a 291-residue protein sequence, read N- to C-terminus: Protease HtpX homolog (291 aa).

2 helical membrane-spanning segments follow: residues 4-24 and 38-58; these read VFLFLITNLAVILVLSFSARL and LGMLLAFAALIGFGGSFISLL. Residue His144 participates in Zn(2+) binding. Glu145 is an active-site residue. Residue His148 coordinates Zn(2+). A run of 2 helical transmembrane segments spans residues 159 to 179 and 199 to 219; these read LIQGVVNTFVIFLARVFAYAL and ISSIAFEIVFGILASIVVMYF. Glu224 is a binding site for Zn(2+).

The protein belongs to the peptidase M48B family. The cofactor is Zn(2+).

The protein resides in the cell inner membrane. This is Protease HtpX homolog from Chlorobium luteolum (strain DSM 273 / BCRC 81028 / 2530) (Pelodictyon luteolum).